The following is a 205-amino-acid chain: MFEYVTGYVEYVGPEYVVIDHNGIGYQIFTPNPYVFQRSKQEIRVYTYHYVREDIMALYGFKTREERLLFTKLLGVSGIGPKGALAILASGQTGQVVQAIEHEDEKFLVKFPGVGKKTARQMILDLKGKLADVVPDAFVDLFSDTESFDTKKGSSVELDEALEALRALGYAEREVSRVVPELLKESLTTDQYIKKALSLLLNGKR.

The interval 1-62 (MFEYVTGYVE…EDIMALYGFK (62 aa)) is domain I. Residues 63–141 (TREERLLFTK…DVVPDAFVDL (79 aa)) are domain II. The flexible linker stretch occupies residues 142–152 (FSDTESFDTKK). The interval 153-205 (GSSVELDEALEALRALGYAEREVSRVVPELLKESLTTDQYIKKALSLLLNGKR) is domain III.

It belongs to the RuvA family. In terms of assembly, homotetramer. Forms an RuvA(8)-RuvB(12)-Holliday junction (HJ) complex. HJ DNA is sandwiched between 2 RuvA tetramers; dsDNA enters through RuvA and exits via RuvB. An RuvB hexamer assembles on each DNA strand where it exits the tetramer. Each RuvB hexamer is contacted by two RuvA subunits (via domain III) on 2 adjacent RuvB subunits; this complex drives branch migration. In the full resolvosome a probable DNA-RuvA(4)-RuvB(12)-RuvC(2) complex forms which resolves the HJ.

The protein resides in the cytoplasm. Its function is as follows. The RuvA-RuvB-RuvC complex processes Holliday junction (HJ) DNA during genetic recombination and DNA repair, while the RuvA-RuvB complex plays an important role in the rescue of blocked DNA replication forks via replication fork reversal (RFR). RuvA specifically binds to HJ cruciform DNA, conferring on it an open structure. The RuvB hexamer acts as an ATP-dependent pump, pulling dsDNA into and through the RuvAB complex. HJ branch migration allows RuvC to scan DNA until it finds its consensus sequence, where it cleaves and resolves the cruciform DNA. The chain is Holliday junction branch migration complex subunit RuvA from Bacillus mycoides (strain KBAB4) (Bacillus weihenstephanensis).